Reading from the N-terminus, the 299-residue chain is Tyrosine recombinase XerC (299 aa).

Residues 1 to 85 form the Core-binding (CB) domain; the sequence is MKRQLEAYCA…AVRGLYRYLN (85 aa). One can recognise a Tyr recombinase domain in the interval 106-285; sequence RLPKVLDTDR…DFQHLAAVYD (180 aa). Active-site residues include R146, K170, H237, R240, and H263. The O-(3'-phospho-DNA)-tyrosine intermediate role is filled by Y272.

This sequence belongs to the 'phage' integrase family. XerC subfamily. Forms a cyclic heterotetrameric complex composed of two molecules of XerC and two molecules of XerD.

Its subcellular location is the cytoplasm. Site-specific tyrosine recombinase, which acts by catalyzing the cutting and rejoining of the recombining DNA molecules. The XerC-XerD complex is essential to convert dimers of the bacterial chromosome into monomers to permit their segregation at cell division. It also contributes to the segregational stability of plasmids. In Pseudomonas putida (strain ATCC 47054 / DSM 6125 / CFBP 8728 / NCIMB 11950 / KT2440), this protein is Tyrosine recombinase XerC.